The following is a 266-amino-acid chain: Apolipoprotein A-I (266 aa).

The N-terminal stretch at 1–18 is a signal peptide; that stretch reads MKAVVLTLAVLFLTGSQA. 2 repeat units span residues 67–88 and 89–110. The 10 X approximate tandem repeats stretch occupies residues 67–266; it reads LKLLDNWDSL…DEATKKLNAQ (200 aa). Methionine sulfoxide is present on Met-109. The 3; half-length repeat unit spans residues 111–121; it reads KDLEEVKKKVQ. Tandem repeats lie at residues 122–143, 144–165, 166–187, 188–209, and 210–231. Residues 232–242 form a 9; half-length repeat; the sequence is PALEDLRQGLM. Repeat unit 10 spans residues 243–266; sequence PVLESFRASLLAAVDEATKKLNAQ.

The protein belongs to the apolipoprotein A1/A4/E family. In terms of assembly, homodimer. Interacts with APOA1BP and CLU. Component of a sperm activating protein complex (SPAP), consisting of APOA1, an immunoglobulin heavy chain, an immunoglobulin light chain and albumin. Interacts with NDRG1. Interacts with SCGB3A2. Interacts with NAXE and YJEFN3. Glycosylated. In terms of processing, palmitoylated. Post-translationally, phosphorylation sites are present in the extracellular medium.

The protein localises to the secreted. In terms of biological role, participates in the reverse transport of cholesterol from tissues to the liver for excretion by promoting cholesterol efflux from tissues and by acting as a cofactor for the lecithin cholesterol acyltransferase (LCAT). As part of the SPAP complex, activates spermatozoa motility. This is Apolipoprotein A-I (APOA1) from Phoca vitulina (Harbor seal).